Here is a 716-residue protein sequence, read N- to C-terminus: Probable extracellular serine carboxypeptidase (716 aa).

The N-terminal stretch at 1–17 (MVKLTACLLLLVAAVQA) is a signal peptide. 2 N-linked (GlcNAc...) asparagine glycosylation sites follow: Asn-143 and Asn-174. Ser-188 acts as the Charge relay system in catalysis. 2 N-linked (GlcNAc...) asparagine glycosylation sites follow: Asn-258 and Asn-354. Residue Asp-466 is the Charge relay system of the active site. Residues Asn-507 and Asn-550 are each glycosylated (N-linked (GlcNAc...) asparagine). Residues 617–636 (RDLAAQPSKSKKDRRGQQLS) are disordered. The chain crosses the membrane as a helical span at residues 652-672 (LGFVSFLVFAFSSFTFIPDIE).

It belongs to the peptidase S28 family.

The protein localises to the membrane. Its subcellular location is the secreted. The chain is Probable extracellular serine carboxypeptidase from Arthroderma benhamiae (strain ATCC MYA-4681 / CBS 112371) (Trichophyton mentagrophytes).